Reading from the N-terminus, the 140-residue chain is Pro-Viral epidermal growth factor (140 aa).

The N-terminal stretch at 1-18 (MSMKYLMLLFAAMIIRSF) is a signal peptide. At 19-100 (ADSGNAIETT…SENPNTTTSY (82 aa)) the chain is on the extracellular side. A glycan (N-linked (GlcNAc...) asparagine; by host) is linked at Asn34. The region spanning 41–81 (AIRLCGPEGDGYCLHGDCIHARDIDGMYCRCSHGYTGIRCQ) is the EGF-like domain. Disulfide bonds link Cys45–Cys58, Cys53–Cys69, and Cys71–Cys80. Residue Asn95 is glycosylated (N-linked (GlcNAc...) asparagine; by host). The helical transmembrane segment at 101–121 (IPSPGIMLVLVGIIIITCCLL) threads the bilayer. Over 122-140 (SVYRFTRRTKLPIQDMVVP) the chain is Cytoplasmic.

It belongs to the orthopoxvirus OPG019 family. In terms of assembly, viral epidermal growth factor interacts with host EGFR and promotes EGFR dimerization. Cleaved at the cell surface by host ADAM10, thereby releasing the secreted form of VGF.

It is found in the host membrane. The protein resides in the secreted. In terms of biological role, stimulates cellular proliferation (hyperplasia)and mobility around infected cells to promote rapid and efficient spread of infection. This effect is beneficial for virus replication in vivo, because poxviruses replicate possibly better in proliferating cells than in quiescent cells. Acts by binding host EGFR, inducing its dimerization, autophosphorylation and leading to activation of several cellular pathways regulating cell proliferation or cell survival. The activation by host EGFR of mitogen activated protein kinases (MAPK) and extracellular-signal regulated kinases (ERK) are essential for the positive effect of vaccinia growth factor on poxvirus virulence in vivo. This Bos taurus (Bovine) protein is Pro-Viral epidermal growth factor (OPG019).